The following is an 85-amino-acid chain: WAP four-disulfide core domain protein 12 (85 aa).

The signal sequence occupies residues 1 to 21 (MWPNSILVLMTLLISSTLVTG). The 48-residue stretch at 25–72 (KGEEKRVCPPDYVRCIRQDDPQCYSDNDCGDQEICCFWQCGFKCVLPV) folds into the WAP domain. Disulfide bonds link Cys-32–Cys-60, Cys-39–Cys-64, Cys-47–Cys-59, and Cys-53–Cys-68.

Constitutively expressed in tongue.

It is found in the secreted. Its function is as follows. Antibacterial protein which inhibits the growth of E.coli and S.aureus. Putative acid-stable proteinase inhibitor. This chain is WAP four-disulfide core domain protein 12, found in Mus musculus (Mouse).